The primary structure comprises 198 residues: Putative coiled-coil domain-containing protein 196 (198 aa).

The stretch at 24–117 (NYLKELNEDL…RKEMEMLWNK (94 aa)) forms a coiled coil. Basic and acidic residues-rich tracts occupy residues 135 to 144 (NKTDLQDGKA) and 154 to 167 (TKNE…EKGK). The disordered stretch occupies residues 135-198 (NKTDLQDGKA…VSGTSQHHSE (64 aa)). The span at 187–198 (GQVSGTSQHHSE) shows a compositional bias: polar residues.

The chain is Putative coiled-coil domain-containing protein 196 from Bos taurus (Bovine).